The sequence spans 340 residues: MKSLVKAKKEPGIWMQDIPVPEYGVNDVLIKIKRTAICGTDIHIYSWDEWAQATIPVPMTVGHEFYGEIVEVGKEVQGLKVGQRVSGEGHITCGFCRNCRAGKRHLCRNTLGVGVNRPGCFAEYLALPATNVIALPDNITEEQAAILDPFGNAAHCALAFDVVGEDVLITGAGPIGIMAAAIVRHIGARHVVITDVNDHRLELARQMGVSRAVNVKYQKLSDVANELGMLEGFDVGLEMSGNPMALNDMMKAMNHGGHVALLGIPPQETPIDWNQVIFKGLVIKGIYGREMFETWYKMIAMLQSGLNISPVITHNFPVDEYQHAFQIMASGQSGKVILNW.

A Zn(2+)-binding site is contributed by cysteine 38. Residues threonine 40 and histidine 43 each act as charge relay system in the active site. Residues histidine 63, glutamate 64, cysteine 93, cysteine 96, cysteine 99, and cysteine 107 each contribute to the Zn(2+) site. NAD(+) contacts are provided by residues isoleucine 175, aspartate 195, arginine 200, 262-264 (LGI), and 286-287 (IY).

It belongs to the zinc-containing alcohol dehydrogenase family. In terms of assembly, homotetramer. Zn(2+) serves as cofactor.

Its subcellular location is the cytoplasm. The catalysed reaction is L-threonine + NAD(+) = (2S)-2-amino-3-oxobutanoate + NADH + H(+). Its pathway is amino-acid degradation; L-threonine degradation via oxydo-reductase pathway; glycine from L-threonine: step 1/2. Functionally, catalyzes the NAD(+)-dependent oxidation of L-threonine to 2-amino-3-ketobutyrate. In Legionella pneumophila subsp. pneumophila (strain Philadelphia 1 / ATCC 33152 / DSM 7513), this protein is L-threonine 3-dehydrogenase.